A 530-amino-acid polypeptide reads, in one-letter code: Chaperonin GroEL (530 aa).

Residues 30–33, Lys51, 87–91, Gly415, and Asp495 contribute to the ATP site; these read TLGP and DGTTT.

It belongs to the chaperonin (HSP60) family. Forms a cylinder of 14 subunits composed of two heptameric rings stacked back-to-back. Interacts with the co-chaperonin GroES.

It is found in the cytoplasm. The enzyme catalyses ATP + H2O + a folded polypeptide = ADP + phosphate + an unfolded polypeptide.. In terms of biological role, together with its co-chaperonin GroES, plays an essential role in assisting protein folding. The GroEL-GroES system forms a nano-cage that allows encapsulation of the non-native substrate proteins and provides a physical environment optimized to promote and accelerate protein folding. The polypeptide is Chaperonin GroEL (Carsonella ruddii (strain PV)).